The sequence spans 365 residues: Flagellar P-ring protein (365 aa).

An N-terminal signal peptide occupies residues 1–21 (MIKRIISIVFLLLTLPQLALA).

Belongs to the FlgI family. As to quaternary structure, the basal body constitutes a major portion of the flagellar organelle and consists of four rings (L,P,S, and M) mounted on a central rod.

The protein localises to the periplasm. Its subcellular location is the bacterial flagellum basal body. Assembles around the rod to form the L-ring and probably protects the motor/basal body from shearing forces during rotation. This Geobacter metallireducens (strain ATCC 53774 / DSM 7210 / GS-15) protein is Flagellar P-ring protein.